Here is a 198-residue protein sequence, read N- to C-terminus: Holliday junction branch migration complex subunit RuvA (198 aa).

The segment at 1–63 is domain I; sequence MYDYIKGQLT…EDAHLLFGFH (63 aa). The tract at residues 64 to 142 is domain II; it reads TEDEKDVFLK…EAPQETGHTK (79 aa). The tract at residues 143 to 147 is flexible linker; sequence ARSNK. The domain III stretch occupies residues 148-198; it reads AGNTQLDEAIEALLALGYKAKELKKIRAFFEETSETAEQYIKSALKLLMKG.

It belongs to the RuvA family. In terms of assembly, homotetramer. Forms an RuvA(8)-RuvB(12)-Holliday junction (HJ) complex. HJ DNA is sandwiched between 2 RuvA tetramers; dsDNA enters through RuvA and exits via RuvB. An RuvB hexamer assembles on each DNA strand where it exits the tetramer. Each RuvB hexamer is contacted by two RuvA subunits (via domain III) on 2 adjacent RuvB subunits; this complex drives branch migration. In the full resolvosome a probable DNA-RuvA(4)-RuvB(12)-RuvC(2) complex forms which resolves the HJ.

The protein localises to the cytoplasm. In terms of biological role, the RuvA-RuvB-RuvC complex processes Holliday junction (HJ) DNA during genetic recombination and DNA repair, while the RuvA-RuvB complex plays an important role in the rescue of blocked DNA replication forks via replication fork reversal (RFR). RuvA specifically binds to HJ cruciform DNA, conferring on it an open structure. The RuvB hexamer acts as an ATP-dependent pump, pulling dsDNA into and through the RuvAB complex. HJ branch migration allows RuvC to scan DNA until it finds its consensus sequence, where it cleaves and resolves the cruciform DNA. The polypeptide is Holliday junction branch migration complex subunit RuvA (Streptococcus pyogenes serotype M2 (strain MGAS10270)).